The following is a 474-amino-acid chain: Citrate synthase 4, mitochondrial (474 aa).

The transit peptide at 1-16 (MVFFRSVSAFTRLRSR) directs the protein to the mitochondrion. Active-site residues include histidine 308, histidine 354, and aspartate 409.

The protein belongs to the citrate synthase family. As to quaternary structure, homodimer.

It is found in the mitochondrion matrix. The catalysed reaction is oxaloacetate + acetyl-CoA + H2O = citrate + CoA + H(+). It participates in carbohydrate metabolism; tricarboxylic acid cycle; isocitrate from oxaloacetate: step 1/2. This Arabidopsis thaliana (Mouse-ear cress) protein is Citrate synthase 4, mitochondrial (CSY4).